Reading from the N-terminus, the 290-residue chain is Nitrogenase iron protein 1 (290 aa).

10 to 17 (GKGGIGKS) is a binding site for ATP. Position 98 (Cys-98) interacts with [4Fe-4S] cluster. The residue at position 101 (Arg-101) is an ADP-ribosylarginine; by dinitrogenase reductase ADP-ribosyltransferase. Cys-133 is a [4Fe-4S] cluster binding site.

This sequence belongs to the NifH/BchL/ChlL family. As to quaternary structure, homodimer. Requires [4Fe-4S] cluster as cofactor. Post-translationally, the reversible ADP-ribosylation of Arg-101 inactivates the nitrogenase reductase and regulates nitrogenase activity.

It carries out the reaction N2 + 8 reduced [2Fe-2S]-[ferredoxin] + 16 ATP + 16 H2O = H2 + 8 oxidized [2Fe-2S]-[ferredoxin] + 2 NH4(+) + 16 ADP + 16 phosphate + 6 H(+). Nitrogenase holoenzyme is subject to 'conformational protection' by FeSII; under oxidizing conditions FeSII binds to the holoenzyme and reversibly protects it from oxidation. The key enzymatic reactions in nitrogen fixation are catalyzed by the nitrogenase complex, which has 2 components: the iron protein (component 2) and a component 1 which is either a molybdenum-iron protein, a vanadium-iron, or an iron-iron protein. In Azotobacter vinelandii, this protein is Nitrogenase iron protein 1 (nifH1).